Here is an 858-residue protein sequence, read N- to C-terminus: Autoinducer 2 sensor kinase/phosphatase LuxQ (858 aa).

2 consecutive transmembrane segments (helical) span residues 14–34 (STLI…GIFV) and 362–382 (LFNF…LIQI). The 223-residue stretch at 488-710 (KMSHEIRTPI…TFVVTLPVKD (223 aa)) folds into the Histidine kinase domain. Histidine 491 is modified (phosphohistidine; by autocatalysis). In terms of domain architecture, Response regulatory spans 735-850 (KVLLVEDNHT…ALHEAFVDFK (116 aa)). Aspartate 784 is subject to 4-aspartylphosphate.

In terms of assembly, binds the complex formed by the autoinducer and LuxP.

The protein resides in the cell inner membrane. The catalysed reaction is ATP + protein L-histidine = ADP + protein N-phospho-L-histidine.. Functionally, at low cell density, in absence of autoinducer has a kinase activity, and autophosphorylates on a histidine residue. The phosphoryl group is then transferred to an aspartate residue in the response regulator domain. The phosphoryl group is transferred to LuxU, and ultimately to LuxO. At high cell density, in the presence of autoinducer, the kinase activity is inactivated, and the response regulator domain has a phosphatase activity. The polypeptide is Autoinducer 2 sensor kinase/phosphatase LuxQ (luxQ) (Vibrio parahaemolyticus serotype O3:K6 (strain RIMD 2210633)).